The sequence spans 552 residues: Putative transport protein YPTS_4123 (552 aa).

6 consecutive transmembrane segments (helical) span residues 1–21 (MSAI…GLWI), 26–46 (IYGV…VGHF), 65–85 (FGLI…FFSS), 96–116 (FAIL…KLFA), 119–139 (LPII…LGAA), and 158–178 (MGYA…MWLI). RCK C-terminal domains lie at 192-276 (AFDS…VVGE) and 279-361 (DVTL…IVGN). 6 helical membrane-spanning segments follow: residues 371–391 (MLPV…PLFV), 393–413 (GFPA…ALIL), 439–459 (IVLF…NTLV), 464–484 (LAWI…VGIL), 493–513 (YLTL…LAFA), and 530–550 (VYPL…VLFW).

It belongs to the AAE transporter (TC 2.A.81) family. YidE subfamily.

Its subcellular location is the cell membrane. This Yersinia pseudotuberculosis serotype IB (strain PB1/+) protein is Putative transport protein YPTS_4123.